The primary structure comprises 253 residues: 5'/3'-nucleotidase SurE (253 aa).

A divalent metal cation-binding residues include D8, D9, S39, and N92.

This sequence belongs to the SurE nucleotidase family. A divalent metal cation serves as cofactor.

The protein resides in the cytoplasm. It carries out the reaction a ribonucleoside 5'-phosphate + H2O = a ribonucleoside + phosphate. The catalysed reaction is a ribonucleoside 3'-phosphate + H2O = a ribonucleoside + phosphate. The enzyme catalyses [phosphate](n) + H2O = [phosphate](n-1) + phosphate + H(+). Nucleotidase with a broad substrate specificity as it can dephosphorylate various ribo- and deoxyribonucleoside 5'-monophosphates and ribonucleoside 3'-monophosphates with highest affinity to 3'-AMP. Also hydrolyzes polyphosphate (exopolyphosphatase activity) with the preference for short-chain-length substrates (P20-25). Might be involved in the regulation of dNTP and NTP pools, and in the turnover of 3'-mononucleotides produced by numerous intracellular RNases (T1, T2, and F) during the degradation of various RNAs. The polypeptide is 5'/3'-nucleotidase SurE (Citrobacter koseri (strain ATCC BAA-895 / CDC 4225-83 / SGSC4696)).